A 467-amino-acid polypeptide reads, in one-letter code: Methylenetetrahydrofolate--tRNA-(uracil-5-)-methyltransferase TrmFO (467 aa).

Residue 11–16 (GAGLAG) participates in FAD binding.

The protein belongs to the MnmG family. TrmFO subfamily. Requires FAD as cofactor.

The protein localises to the cytoplasm. It carries out the reaction uridine(54) in tRNA + (6R)-5,10-methylene-5,6,7,8-tetrahydrofolate + NADH + H(+) = 5-methyluridine(54) in tRNA + (6S)-5,6,7,8-tetrahydrofolate + NAD(+). The enzyme catalyses uridine(54) in tRNA + (6R)-5,10-methylene-5,6,7,8-tetrahydrofolate + NADPH + H(+) = 5-methyluridine(54) in tRNA + (6S)-5,6,7,8-tetrahydrofolate + NADP(+). Catalyzes the folate-dependent formation of 5-methyl-uridine at position 54 (M-5-U54) in all tRNAs. The polypeptide is Methylenetetrahydrofolate--tRNA-(uracil-5-)-methyltransferase TrmFO (Prochlorococcus marinus (strain MIT 9303)).